Here is a 173-residue protein sequence, read N- to C-terminus: Large ribosomal subunit protein uL10 (173 aa).

It belongs to the universal ribosomal protein uL10 family. In terms of assembly, part of the ribosomal stalk of the 50S ribosomal subunit. The N-terminus interacts with L11 and the large rRNA to form the base of the stalk. The C-terminus forms an elongated spine to which L12 dimers bind in a sequential fashion forming a multimeric L10(L12)X complex.

Its function is as follows. Forms part of the ribosomal stalk, playing a central role in the interaction of the ribosome with GTP-bound translation factors. This is Large ribosomal subunit protein uL10 from Oleidesulfovibrio alaskensis (strain ATCC BAA-1058 / DSM 17464 / G20) (Desulfovibrio alaskensis).